We begin with the raw amino-acid sequence, 352 residues long: Quinolinate synthase (352 aa).

Positions 48 and 69 each coordinate iminosuccinate. Position 114 (Cys114) interacts with [4Fe-4S] cluster. Iminosuccinate contacts are provided by residues 140–142 (YAN) and Ser157. Cys201 contributes to the [4Fe-4S] cluster binding site. Residues 227-229 (HPE) and Thr244 each bind iminosuccinate. Cys298 contacts [4Fe-4S] cluster.

Belongs to the quinolinate synthase family. Type 1 subfamily. The cofactor is [4Fe-4S] cluster.

It localises to the cytoplasm. It carries out the reaction iminosuccinate + dihydroxyacetone phosphate = quinolinate + phosphate + 2 H2O + H(+). The protein operates within cofactor biosynthesis; NAD(+) biosynthesis; quinolinate from iminoaspartate: step 1/1. Catalyzes the condensation of iminoaspartate with dihydroxyacetone phosphate to form quinolinate. This Pseudomonas fluorescens (strain Pf0-1) protein is Quinolinate synthase.